The sequence spans 185 residues: dCTP deaminase (185 aa).

Residues 107-112, 131-133, Q152, Y166, and Q176 contribute to the dCTP site; these read KSTYAR and TLE. E133 acts as the Proton donor/acceptor in catalysis.

This sequence belongs to the dCTP deaminase family. In terms of assembly, homotrimer.

It catalyses the reaction dCTP + H2O + H(+) = dUTP + NH4(+). The protein operates within pyrimidine metabolism; dUMP biosynthesis; dUMP from dCTP (dUTP route): step 1/2. Functionally, catalyzes the deamination of dCTP to dUTP. This chain is dCTP deaminase, found in Wolbachia pipientis wMel.